The chain runs to 482 residues: tRNA sulfurtransferase (482 aa).

Residues 61 to 165 form the THUMP domain; sequence DLVRDALTRI…DDRLLLVRGR (105 aa). ATP-binding positions include 183–184, lysine 265, glycine 287, and glutamine 296; that span reads LI. A disulfide bridge connects residues cysteine 344 and cysteine 456. The region spanning 404–482 is the Rhodanese domain; it reads LAEGDVVLDI…GYDNVRVYRP (79 aa). Cysteine 456 acts as the Cysteine persulfide intermediate in catalysis.

The protein belongs to the ThiI family.

It is found in the cytoplasm. It carries out the reaction [ThiI sulfur-carrier protein]-S-sulfanyl-L-cysteine + a uridine in tRNA + 2 reduced [2Fe-2S]-[ferredoxin] + ATP + H(+) = [ThiI sulfur-carrier protein]-L-cysteine + a 4-thiouridine in tRNA + 2 oxidized [2Fe-2S]-[ferredoxin] + AMP + diphosphate. The catalysed reaction is [ThiS sulfur-carrier protein]-C-terminal Gly-Gly-AMP + S-sulfanyl-L-cysteinyl-[cysteine desulfurase] + AH2 = [ThiS sulfur-carrier protein]-C-terminal-Gly-aminoethanethioate + L-cysteinyl-[cysteine desulfurase] + A + AMP + 2 H(+). It participates in cofactor biosynthesis; thiamine diphosphate biosynthesis. In terms of biological role, catalyzes the ATP-dependent transfer of a sulfur to tRNA to produce 4-thiouridine in position 8 of tRNAs, which functions as a near-UV photosensor. Also catalyzes the transfer of sulfur to the sulfur carrier protein ThiS, forming ThiS-thiocarboxylate. This is a step in the synthesis of thiazole, in the thiamine biosynthesis pathway. The sulfur is donated as persulfide by IscS. This chain is tRNA sulfurtransferase, found in Edwardsiella ictaluri (strain 93-146).